The following is a 257-amino-acid chain: tRNA pseudouridine synthase A (257 aa).

Asp53 (nucleophile) is an active-site residue. Tyr111 contributes to the substrate binding site.

The protein belongs to the tRNA pseudouridine synthase TruA family. In terms of assembly, homodimer.

It catalyses the reaction uridine(38/39/40) in tRNA = pseudouridine(38/39/40) in tRNA. Formation of pseudouridine at positions 38, 39 and 40 in the anticodon stem and loop of transfer RNAs. In Xanthomonas oryzae pv. oryzae (strain MAFF 311018), this protein is tRNA pseudouridine synthase A.